A 150-amino-acid chain; its full sequence is Con-Ins Im1 (150 aa).

The N-terminal stretch at 1–25 (MATSLLSPLLVAMLGFLLHVHVARA) is a signal peptide. Cystine bridges form between cysteine 31-cysteine 133, cysteine 46-cysteine 136, cysteine 58-cysteine 149, and cysteine 135-cysteine 140. The propeptide at 64 to 111 (GYAGGQRQLRKRTSMIDSDDMEAEGGSRGGFLMSKRRALSYLQKETNP) is c peptide. At glutamate 144 the chain carries 4-carboxyglutamate; partial.

It belongs to the insulin family. In terms of assembly, heterodimer of A and B chains; disulfide-linked. As to expression, expressed by the venom gland.

It is found in the secreted. Functionally, this venom insulin facilitates prey capture by rapidly inducing hypoglycemic shock. Intraperitoneal injection of this peptide into zebrafish lowers blood glucose with the same potency than human insulin. In vivo, when applied to water, this peptide reduces overall locomotor activity of zebrafish larvae, observed as a significant decrease in the percentage of time spent swimming and movement frequency. This chain is Con-Ins Im1, found in Conus imperialis (Imperial cone).